The following is a 201-amino-acid chain: Peptidyl-tRNA hydrolase (201 aa).

A tRNA-binding site is contributed by tyrosine 17. Catalysis depends on histidine 22, which acts as the Proton acceptor. The tRNA site is built by phenylalanine 76, asparagine 78, and asparagine 124.

This sequence belongs to the PTH family. Monomer.

The protein resides in the cytoplasm. The enzyme catalyses an N-acyl-L-alpha-aminoacyl-tRNA + H2O = an N-acyl-L-amino acid + a tRNA + H(+). In terms of biological role, hydrolyzes ribosome-free peptidyl-tRNAs (with 1 or more amino acids incorporated), which drop off the ribosome during protein synthesis, or as a result of ribosome stalling. Catalyzes the release of premature peptidyl moieties from peptidyl-tRNA molecules trapped in stalled 50S ribosomal subunits, and thus maintains levels of free tRNAs and 50S ribosomes. This Nitratidesulfovibrio vulgaris (strain ATCC 29579 / DSM 644 / CCUG 34227 / NCIMB 8303 / VKM B-1760 / Hildenborough) (Desulfovibrio vulgaris) protein is Peptidyl-tRNA hydrolase.